Reading from the N-terminus, the 501-residue chain is Phenylalanine--tRNA ligase alpha subunit (501 aa).

Residues Thr-344, Gln-383–Asp-385, and Phe-424 contribute to the L-phenylalanine site. Glu-426 provides a ligand contact to Mg(2+). Phe-449 serves as a coordination point for L-phenylalanine.

The protein belongs to the class-II aminoacyl-tRNA synthetase family. Phe-tRNA synthetase alpha subunit type 2 subfamily. In terms of assembly, tetramer of two alpha and two beta subunits. The cofactor is Mg(2+).

The protein resides in the cytoplasm. The enzyme catalyses tRNA(Phe) + L-phenylalanine + ATP = L-phenylalanyl-tRNA(Phe) + AMP + diphosphate + H(+). The chain is Phenylalanine--tRNA ligase alpha subunit from Thermococcus kodakarensis (strain ATCC BAA-918 / JCM 12380 / KOD1) (Pyrococcus kodakaraensis (strain KOD1)).